The sequence spans 393 residues: S-adenosylmethionine synthase 2 (393 aa).

Glutamate 9 serves as a coordination point for Mg(2+). Histidine 15 serves as a coordination point for ATP. Glutamate 43 is a binding site for K(+). Residues glutamate 56 and glutamine 99 each contribute to the L-methionine site. ATP contacts are provided by residues 167-169 (DGK), 235-238 (SGRF), aspartate 246, 252-253 (RK), alanine 269, lysine 273, and lysine 277. Aspartate 246 is a binding site for L-methionine. Lysine 277 is a binding site for L-methionine.

Belongs to the AdoMet synthase family. In terms of assembly, homotetramer. Mn(2+) serves as cofactor. Mg(2+) is required as a cofactor. It depends on Co(2+) as a cofactor. Requires K(+) as cofactor. Roots and shoots.

It localises to the cytoplasm. The catalysed reaction is L-methionine + ATP + H2O = S-adenosyl-L-methionine + phosphate + diphosphate. It functions in the pathway amino-acid biosynthesis; S-adenosyl-L-methionine biosynthesis; S-adenosyl-L-methionine from L-methionine: step 1/1. Functionally, catalyzes the formation of S-adenosylmethionine from methionine and ATP. The reaction comprises two steps that are both catalyzed by the same enzyme: formation of S-adenosylmethionine (AdoMet) and triphosphate, and subsequent hydrolysis of the triphosphate. The sequence is that of S-adenosylmethionine synthase 2 (SAMS2) from Pinus contorta (Shore pine).